Consider the following 62-residue polypeptide: Photosystem II reaction center protein Z (62 aa).

2 helical membrane-spanning segments follow: residues 8–28 (TLFA…VVFA) and 41–61 (FSGV…NSFV).

It belongs to the PsbZ family. As to quaternary structure, PSII is composed of 1 copy each of membrane proteins PsbA, PsbB, PsbC, PsbD, PsbE, PsbF, PsbH, PsbI, PsbJ, PsbK, PsbL, PsbM, PsbT, PsbY, PsbZ, Psb30/Ycf12, at least 3 peripheral proteins of the oxygen-evolving complex and a large number of cofactors. It forms dimeric complexes.

It localises to the plastid. It is found in the chloroplast thylakoid membrane. In terms of biological role, may control the interaction of photosystem II (PSII) cores with the light-harvesting antenna, regulates electron flow through the 2 photosystem reaction centers. PSII is a light-driven water plastoquinone oxidoreductase, using light energy to abstract electrons from H(2)O, generating a proton gradient subsequently used for ATP formation. In Oltmannsiellopsis viridis (Marine flagellate), this protein is Photosystem II reaction center protein Z.